Here is a 381-residue protein sequence, read N- to C-terminus: Phthiodiolone/phenolphthiodiolone dimycocerosates ketoreductase (381 aa).

It belongs to the mer family. Phthiodiolone/phenolphthiodiolone dimycocerosates ketoreductase subfamily.

In terms of biological role, catalyzes the reduction of the keto moiety of phthiodiolone dimycocerosates (DIM B) and glycosylated phenolphthiodiolone dimycocerosates to form the intermediate compounds phthiotriol and glycosylated phenolphthiotriol dimycocerosates during phthiocerol dimycocerosates (DIM A) and glycosylated phenolphthiocerol dimycocerosates (PGL) biosynthesis. The chain is Phthiodiolone/phenolphthiodiolone dimycocerosates ketoreductase from Mycobacterium tuberculosis (strain CDC 1551 / Oshkosh).